The chain runs to 201 residues: FMN-dependent NADH:quinone oxidoreductase (201 aa).

Residues serine 10, 16-18 (SQS), 96-99 (MYNF), and 140-143 (SRGG) each bind FMN.

The protein belongs to the azoreductase type 1 family. In terms of assembly, homodimer. FMN is required as a cofactor.

The catalysed reaction is 2 a quinone + NADH + H(+) = 2 a 1,4-benzosemiquinone + NAD(+). It catalyses the reaction N,N-dimethyl-1,4-phenylenediamine + anthranilate + 2 NAD(+) = 2-(4-dimethylaminophenyl)diazenylbenzoate + 2 NADH + 2 H(+). Functionally, quinone reductase that provides resistance to thiol-specific stress caused by electrophilic quinones. In terms of biological role, also exhibits azoreductase activity. Catalyzes the reductive cleavage of the azo bond in aromatic azo compounds to the corresponding amines. This is FMN-dependent NADH:quinone oxidoreductase from Yersinia enterocolitica serotype O:8 / biotype 1B (strain NCTC 13174 / 8081).